A 362-amino-acid chain; its full sequence is S-adenosylmethionine:tRNA ribosyltransferase-isomerase (362 aa).

Belongs to the QueA family. As to quaternary structure, monomer.

Its subcellular location is the cytoplasm. It catalyses the reaction 7-aminomethyl-7-carbaguanosine(34) in tRNA + S-adenosyl-L-methionine = epoxyqueuosine(34) in tRNA + adenine + L-methionine + 2 H(+). Its pathway is tRNA modification; tRNA-queuosine biosynthesis. Functionally, transfers and isomerizes the ribose moiety from AdoMet to the 7-aminomethyl group of 7-deazaguanine (preQ1-tRNA) to give epoxyqueuosine (oQ-tRNA). The polypeptide is S-adenosylmethionine:tRNA ribosyltransferase-isomerase (Syntrophus aciditrophicus (strain SB)).